Reading from the N-terminus, the 323-residue chain is MSTVGSSSEGRHSVRCFRHRNANTFLTYSKCPLEPEFIGEHLFRLTREYEPAYILVVRETHTDGTWHCHALLQCIKPCTTRDERYFDIDRYHGNIQSAKSTDKVREYILKDPKDKWEKGTYIPRKKSFVPPGKEPAEKKPTKDEVMREIMTHATSREEYLSLVQSSLPYDWATKLNYFEYSASRLFPDIAEPYTNPHPTTEYDLHCNETIEDWLKPNIYQVSPQAYKLLEPSCLSLEQAIADLEWLDDTTRMLQEKEREASTSAAQHGQVKHPGLEASDDTTTGKTISTGLHMMKKLSTMSLTTFPSSSVRAGNDSSAAKKTT.

One can recognise a CRESS-DNA virus Rep endonuclease domain in the interval 18 to 121 (RHRNANTFLT…PKDKWEKGTY (104 aa)). Positions 25–28 (FLTY) match the RCR-1 motif. Residues E59, H67, and H69 each coordinate a divalent metal cation. The RCR-2 signature appears at 67–69 (HCH). Catalysis depends on Y107, which acts as the For DNA cleavage activity. The RCR-3 motif lies at 107 to 110 (YILK). D111 lines the a divalent metal cation pocket. Positions 181 to 193 (SASRLFPDIAEPY) are oligomerization. Positions 204–208 (LHCNE) match the LXCXE motif, interaction with host RBR1 motif. The tract at residues 256–286 (KEREASTSAAQHGQVKHPGLEASDDTTTGKT) is disordered.

This sequence belongs to the geminiviridae Rep protein family. Homooligomer. Interacts (via LXCXE domain) with host retinoblastoma-related protein 1 (RBR1), and may thereby deregulate the host cell cycle. Part of the C- and V-complexes which are RepA-Rep-DNA complexes involved in the c-sense and v-sense transcription. Mg(2+) is required as a cofactor. Requires Mn(2+) as cofactor.

It is found in the host nucleus. Its subcellular location is the host cytoplasm. In terms of biological role, implicated in enhancement of V-sense gene expression. Acts a an inhibitor of C-sense gene transcription. The polypeptide is Replication-associated protein A (Megathyrsus maximus (PanSV)).